Consider the following 80-residue polypeptide: UPF0512 protein J (80 aa).

It belongs to the UPF0512 family.

The chain is UPF0512 protein J from Dictyostelium discoideum (Social amoeba).